Reading from the N-terminus, the 422-residue chain is Sphingomyelin phosphodiesterase 2 (422 aa).

Glu49 is a binding site for Mg(2+). Catalysis depends on His272, which acts as the Proton acceptor. 2 helical membrane passes run 325–345 and 354–374; these read ALFG…CVLA and AIML…VYLF. The tract at residues 397-422 is disordered; that stretch reads TETQDLGSEPHPTHCRQQEADRAEEK. Residues 412 to 422 are compositionally biased toward basic and acidic residues; that stretch reads RQQEADRAEEK.

This sequence belongs to the neutral sphingomyelinase family. The cofactor is Mg(2+).

It localises to the membrane. It catalyses the reaction a sphingomyelin + H2O = phosphocholine + an N-acylsphing-4-enine + H(+). It carries out the reaction 1-O-octadecyl-sn-glycero-3-phosphocholine + H2O = 1-O-octadecyl-sn-glycerol + phosphocholine + H(+). The catalysed reaction is an N-(acyl)-sphingosylphosphocholine + H2O = an N-acyl-sphingoid base + phosphocholine + H(+). The enzyme catalyses 1-hexadecanoyl-sn-glycero-3-phosphocholine + H2O = 1-hexadecanoyl-sn-glycerol + phosphocholine + H(+). It catalyses the reaction a sphingosylphosphocholine + H2O = a sphingoid base + phosphocholine + H(+). It carries out the reaction 1-O-hexadecyl-sn-glycero-3-phosphocholine + H2O = 1-O-hexadecyl-sn-glycerol + phosphocholine + H(+). The protein operates within lipid metabolism; sphingolipid metabolism. Catalyzes the hydrolysis of sphingomyelin to form ceramide and phosphocholine. Ceramide mediates numerous cellular functions, such as apoptosis and growth arrest, and is capable of regulating these 2 cellular events independently. Also hydrolyzes sphingosylphosphocholine. Hydrolyze 1-acyl-2-lyso-sn-glycero-3-phosphocholine (lyso-PC) and 1-O-alkyl-2-lyso-sn-glycero-3-phosphocholine (lyso-platelet-activating factor). The protein is Sphingomyelin phosphodiesterase 2 (Smpd2) of Rattus norvegicus (Rat).